A 193-amino-acid polypeptide reads, in one-letter code: Translocation protein SEC72 (193 aa).

Component of the heterotetrameric Sec62/63complex composed of SEC62, SEC63, SEC71 and SEC72. The Sec62/63 complex associates with the Sec61 complex to form the Sec complex. May interact with protein YLR301W. Part of a complex consisting of KAR2, SEC63, SEC66 and SEC72.

It is found in the cytoplasm. In terms of biological role, acts as a non-essential component of the Sec62/63 complex which is involved in SRP-independent post-translational translocation across the endoplasmic reticulum (ER) and functions together with the Sec61 complex and KAR2 in a channel-forming translocon complex. A cycle of assembly and disassembly of Sec62/63 complex from SEC61 may govern the activity of the translocon. SEC72 may be involved in signal peptide recognition for a defined subset of leader peptides, or may increase the efficiency of unusual or 'difficult' secretory precursors to the translocation pore, it may be that this protein binds charged leader peptides to the membrane until they engage the translocation apparatus. The polypeptide is Translocation protein SEC72 (SEC72) (Saccharomyces cerevisiae (strain ATCC 204508 / S288c) (Baker's yeast)).